A 203-amino-acid polypeptide reads, in one-letter code: Peptide deformylase (203 aa).

Residues cysteine 130 and histidine 173 each contribute to the Fe cation site. Glutamate 174 is a catalytic residue. Histidine 177 contacts Fe cation.

Belongs to the polypeptide deformylase family. Fe(2+) is required as a cofactor.

The enzyme catalyses N-terminal N-formyl-L-methionyl-[peptide] + H2O = N-terminal L-methionyl-[peptide] + formate. Functionally, removes the formyl group from the N-terminal Met of newly synthesized proteins. Requires at least a dipeptide for an efficient rate of reaction. N-terminal L-methionine is a prerequisite for activity but the enzyme has broad specificity at other positions. The protein is Peptide deformylase of Streptococcus pneumoniae serotype 2 (strain D39 / NCTC 7466).